The chain runs to 108 residues: Heme oxygenase (staphylobilin-producing) 2 (108 aa).

The 92-residue stretch at 2 to 93 folds into the ABM domain; that stretch reads FMAENRLQLQ…DDDGQQSPIL (92 aa). Asn6 serves as a coordination point for Fe cation. Heme-binding positions include 21 to 28 and His76; that span reads RFYNRQGI.

This sequence belongs to the antibiotic biosynthesis monooxygenase family. Heme-degrading monooxygenase IsdG subfamily. As to quaternary structure, homodimer.

It localises to the cytoplasm. It catalyses the reaction heme b + 5 AH2 + 4 O2 + 2 H(+) = delta-staphylobilin + Fe(2+) + formaldehyde + 5 A + 4 H2O. It carries out the reaction heme b + 5 AH2 + 4 O2 + 2 H(+) = beta-staphylobilin + Fe(2+) + formaldehyde + 5 A + 4 H2O. Allows bacterial pathogens to use the host heme as an iron source. Catalyzes the oxidative degradation of the heme macrocyclic porphyrin ring to the oxo-bilirubin chromophore staphylobilin (a mixture of the linear tetrapyrroles 5-oxo-delta-bilirubin and 15-oxo-beta-bilirubin) in the presence of a suitable electron donor such as ascorbate or NADPH--cytochrome P450 reductase, with subsequent release of free iron. In Staphylococcus aureus (strain MRSA252), this protein is Heme oxygenase (staphylobilin-producing) 2 (isdI).